We begin with the raw amino-acid sequence, 383 residues long: Acetylornithine deacetylase (383 aa).

A Zn(2+)-binding site is contributed by histidine 80. Aspartate 82 is a catalytic residue. A Zn(2+)-binding site is contributed by aspartate 112. Glutamate 144 is a catalytic residue. Zn(2+) is bound by residues glutamate 145, glutamate 169, and histidine 355.

It belongs to the peptidase M20A family. ArgE subfamily. As to quaternary structure, homodimer. Requires Zn(2+) as cofactor. Co(2+) serves as cofactor. It depends on glutathione as a cofactor.

The protein localises to the cytoplasm. It carries out the reaction N(2)-acetyl-L-ornithine + H2O = L-ornithine + acetate. It participates in amino-acid biosynthesis; L-arginine biosynthesis; L-ornithine from N(2)-acetyl-L-ornithine (linear): step 1/1. In terms of biological role, catalyzes the hydrolysis of the amide bond of N(2)-acetylated L-amino acids. Cleaves the acetyl group from N-acetyl-L-ornithine to form L-ornithine, an intermediate in L-arginine biosynthesis pathway, and a branchpoint in the synthesis of polyamines. This is Acetylornithine deacetylase from Escherichia coli (strain SMS-3-5 / SECEC).